The sequence spans 902 residues: HTH-type transcriptional regulator MalT (902 aa).

ATP is bound at residue 39–46; sequence SPAGYGKT. The 66-residue stretch at 832-897 folds into the HTH luxR-type domain; that stretch reads ELVRTSPLTQ…EAIVTAENLL (66 aa). Residues 856-875 constitute a DNA-binding region (H-T-H motif); that stretch reads NEQIAQELDVAGTTIKTHIR.

It belongs to the MalT family. Monomer in solution. Oligomerizes to an active state in the presence of the positive effectors ATP and maltotriose.

Its activity is regulated as follows. Activated by ATP and maltotriose, which are both required for DNA binding. Functionally, positively regulates the transcription of the maltose regulon whose gene products are responsible for uptake and catabolism of malto-oligosaccharides. Specifically binds to the promoter region of its target genes, recognizing a short DNA motif called the MalT box. This chain is HTH-type transcriptional regulator MalT, found in Vibrio parahaemolyticus serotype O3:K6 (strain RIMD 2210633).